The sequence spans 985 residues: Ephrin type-A receptor 4-B (985 aa).

Residues 1-20 (MAGIVHGILFCGLFGLCWAV) form the signal peptide. Residues 21–547 (TGSRIYPASE…MIGEGTSPTV (527 aa)) lie on the Extracellular side of the membrane. One can recognise an Eph LBD domain in the interval 30–209 (EVTLLDSRSV…FYKKCPLTVR (180 aa)). 2 consecutive Fibronectin type-III domains span residues 328 to 438 (PPSA…TNQA) and 439 to 536 (APST…TVPS). Asn340 and Asn407 each carry an N-linked (GlcNAc...) asparagine glycan. Residues 548 to 569 (LLVSVAGSIVLVVILIAAFVIS) traverse the membrane as a helical segment. Residues 570 to 985 (RRRSKYSKAK…QQMQGRMVPV (416 aa)) lie on the Cytoplasmic side of the membrane. Phosphotyrosine; by autocatalysis occurs at positions 595 and 601. The Protein kinase domain maps to 620–881 (IKIEKVIGVG…QIVSMLDKLI (262 aa)). ATP-binding positions include 626–634 (IGVGEFGEV) and Lys652. The active-site Proton acceptor is the Asp745. Residues Tyr778 and Tyr927 each carry the phosphotyrosine; by autocatalysis modification. The SAM domain occupies 910–974 (SQVASVLDWL…LSSVQGMRTQ (65 aa)). A PDZ-binding motif is present at residues 983–985 (VPV).

The protein belongs to the protein kinase superfamily. Tyr protein kinase family. Ephrin receptor subfamily. In terms of tissue distribution, localized expression in a subset of neural crest and neural tissues in embryos.

The protein localises to the cell membrane. It localises to the early endosome. It carries out the reaction L-tyrosyl-[protein] + ATP = O-phospho-L-tyrosyl-[protein] + ADP + H(+). Its function is as follows. Receptor tyrosine kinase which binds membrane-bound ephrin family ligands residing on adjacent cells, leading to contact-dependent bidirectional signaling into neighboring cells. The signaling pathway downstream of the receptor is referred to as forward signaling while the signaling pathway downstream of the ephrin ligand is referred to as reverse signaling. Highly promiscuous, it has the unique property among Eph receptors to bind and to be physiologically activated by both GPI-anchored ephrin-A and transmembrane ephrin-B ligands including EFNA1 and EFNB3. Upon activation by ephrin ligands, modulates cell morphology and integrin-dependent cell adhesion through regulation of the Rac, Rap and Rho GTPases activity. Plays an important role in the development of the nervous system controlling different steps of axonal guidance including the establishment of the corticospinal projections. This Xenopus laevis (African clawed frog) protein is Ephrin type-A receptor 4-B (epha4-b).